The sequence spans 230 residues: Isoprenyl transferase (230 aa).

D14 is an active-site residue. A Mg(2+)-binding site is contributed by D14. Substrate is bound by residues 15-18 (GNGR), W19, R27, H31, and 59-61 (STE). Catalysis depends on N62, which acts as the Proton acceptor. Residues W63, R65, R175, and 181-183 (RIS) each bind substrate. Mg(2+) is bound at residue E194.

Belongs to the UPP synthase family. As to quaternary structure, homodimer. It depends on Mg(2+) as a cofactor.

Its function is as follows. Catalyzes the condensation of isopentenyl diphosphate (IPP) with allylic pyrophosphates generating different type of terpenoids. The polypeptide is Isoprenyl transferase (Fusobacterium nucleatum subsp. nucleatum (strain ATCC 25586 / DSM 15643 / BCRC 10681 / CIP 101130 / JCM 8532 / KCTC 2640 / LMG 13131 / VPI 4355)).